A 526-amino-acid chain; its full sequence is Fumitremorgin C synthase (526 aa).

The chain crosses the membrane as a helical span at residues 4–24 (LPLSPAVLFLIIVLPILYLWI). Residue C443 participates in heme binding.

This sequence belongs to the cytochrome P450 family. It depends on heme as a cofactor.

The protein localises to the membrane. It carries out the reaction tryprostatin A + reduced [NADPH--hemoprotein reductase] + O2 = fumitremorgin C + oxidized [NADPH--hemoprotein reductase] + 2 H2O + H(+). Its pathway is mycotoxin biosynthesis. Cytochrome P450 monooxygenase; part of the gene cluster that mediates the biosynthesis of fumitremorgins, indole alkaloids that carry not only intriguing chemical structures, but also interesting biological and pharmacological activities. The biosynthesis of fumitremorgin-type alkaloids begins by condensation of the two amino acids L-tryptophan and L-proline to brevianamide F, catalyzed by the non-ribosomal peptide synthetase ftmA. Brevianamide F is then prenylated by the prenyltransferase ftmPT1/ftmB in the presence of dimethylallyl diphosphate, resulting in the formation of tryprostatin B. The three cytochrome P450 monooxygenases, ftmP450-1/ftmC, ftmP450-2/ftmE and ftmP450-3/FtmG, are responsible for the conversion of tryprostatin B to 6-hydroxytryprostatin B, tryprostatin A to fumitremorgin C and fumitremorgin C to 12,13-dihydroxyfumitremorgin C, respectively. The putative methyltransferase ftmMT/ftmD is expected for the conversion of 6-hydroxytryprostatin B to tryprostatin A. FtmPT2/FtmH catalyzes the prenylation of 12,13-dihydroxyfumitre-morgin C in the presence of dimethylallyl diphosphate, resulting in the formation of fumitremorgin B. Fumitremorgin B is further converted to verruculogen by ftmOx1/ftmF via the insertion of an endoperoxide bond between the two prenyl moieties. In some fungal species, verruculogen is further converted to fumitremorgin A, but the enzymes involved in this step have not been identified yet. The sequence is that of Fumitremorgin C synthase from Aspergillus fumigatus (Neosartorya fumigata).